Here is a 320-residue protein sequence, read N- to C-terminus: MRSKSKQVLLLWLEGFREACSLHRVVILCLRSRKLLLRTGQCFLLNGLIFLGSLGVFKWFIDPSLQWILPDQCSPLTSQEFCSYGGFYAFLRGGLLQLFYVFWFYPLYMLSFILSNIWYNDIAKHGFEAIEISDLNSAEALRQGEALASLNMANAERPSGLGGVMIGIGEQVYSILLLTFFFLEVCVVGVIPYIGKILNFLLLSWMYAYYCYEYKWNFSGISLKKRLDFFQSNWAFFAGFGSPCVLAIFFLSPLVSGALMAILFPLFVLTATGSGPEKLIGAPRRTWKCAGLGKLPIFYIADTLSMLALSIFRLESPHEN.

The next 3 helical transmembrane spans lie at 41–61, 94–114, and 175–195; these read QCFLLNGLIFLGSLGVFKWFI, GLLQLFYVFWFYPLYMLSFIL, and ILLLTFFFLEVCVVGVIPYIG. N217 is a glycosylation site (N-linked (GlcNAc...) asparagine). 3 helical membrane passes run 227 to 247, 248 to 268, and 292 to 312; these read LDFFQSNWAFFAGFGSPCVLA, IFFLSPLVSGALMAILFPLFV, and LGKLPIFYIADTLSMLALSIF.

It belongs to the EI24 (TC 9.B.7) family.

The protein localises to the membrane. The protein is Protein EI24 homolog of Arabidopsis thaliana (Mouse-ear cress).